The following is a 371-amino-acid chain: Transcriptional regulator of yeast form adherence 2 (371 aa).

A C3H1-type 1 zinc finger spans residues 16 to 44 (RNPAVLCSFYSKIGACRHGEKCSKKHLKP). Positions 94–107 (TVSQIDDSPHSNSG) are enriched in polar residues. The interval 94-194 (TVSQIDDSPH…NIEDAKLEDT (101 aa)) is disordered. The span at 115–124 (VETQEVETEN) shows a compositional bias: acidic residues. Positions 132–194 (GDVKIDHNED…NIEDAKLEDT (63 aa)) are enriched in basic and acidic residues. The RRM domain maps to 192-279 (EDTEKDKLPE…KPVYSDLSPV (88 aa)). A C3H1-type 2 zinc finger spans residues 281 to 309 (DFNDACCEEYRDYHDCQRGAMCNYMHVRL). A disordered region spans residues 337 to 371 (ELPGDIRSSSSTNDDETNGNENGISSTMAVLEQLS). Positions 355-371 (GNENGISSTMAVLEQLS) are enriched in polar residues.

Its subcellular location is the nucleus. Its function is as follows. Transcription factor required for yeast cell adherence to silicone substrate. The polypeptide is Transcriptional regulator of yeast form adherence 2 (TRY2) (Candida albicans (strain SC5314 / ATCC MYA-2876) (Yeast)).